A 163-amino-acid chain; its full sequence is Photosystem II extrinsic protein V (163 aa).

The signal sequence occupies residues 1–26; that stretch reads MFRRLIGVVVATVLLTFQLIVGSATA. 4 residues coordinate heme c: Cys63, Cys66, His67, and His118.

It belongs to the cytochrome c family. PsbV subfamily. As to quaternary structure, PSII is composed of 1 copy each of membrane proteins PsbA, PsbB, PsbC, PsbD, PsbE, PsbF, PsbH, PsbI, PsbJ, PsbK, PsbL, PsbM, PsbT, PsbX, PsbY, PsbZ, Psb30/Ycf12, peripheral proteins PsbO, CyanoQ (PsbQ), PsbU, PsbV and a large number of cofactors. It forms dimeric complexes. Requires heme c as cofactor.

Its subcellular location is the cellular thylakoid membrane. In terms of biological role, one of the extrinsic, lumenal subunits of photosystem II (PSII). PSII is a light-driven water plastoquinone oxidoreductase, using light energy to abstract electrons from H(2)O, generating a proton gradient subsequently used for ATP formation. The extrinsic proteins stabilize the structure of photosystem II oxygen-evolving complex (OEC), the ion environment of oxygen evolution and protect the OEC against heat-induced inactivation. Low-potential cytochrome c that plays a role in the OEC of PSII. In Trichormus variabilis (strain ATCC 29413 / PCC 7937) (Anabaena variabilis), this protein is Photosystem II extrinsic protein V.